The following is a 261-amino-acid chain: Tryptophan synthase alpha chain (261 aa).

Residues E47 and D58 each act as proton acceptor in the active site.

The protein belongs to the TrpA family. As to quaternary structure, tetramer of two alpha and two beta chains.

It catalyses the reaction (1S,2R)-1-C-(indol-3-yl)glycerol 3-phosphate + L-serine = D-glyceraldehyde 3-phosphate + L-tryptophan + H2O. The protein operates within amino-acid biosynthesis; L-tryptophan biosynthesis; L-tryptophan from chorismate: step 5/5. Functionally, the alpha subunit is responsible for the aldol cleavage of indoleglycerol phosphate to indole and glyceraldehyde 3-phosphate. This chain is Tryptophan synthase alpha chain, found in Neisseria meningitidis serogroup A / serotype 4A (strain DSM 15465 / Z2491).